Here is an 88-residue protein sequence, read N- to C-terminus: Large ribosomal subunit protein bL31B (88 aa).

The protein belongs to the bacterial ribosomal protein bL31 family. Type B subfamily. In terms of assembly, part of the 50S ribosomal subunit.

The protein is Large ribosomal subunit protein bL31B of Burkholderia orbicola (strain MC0-3).